The chain runs to 193 residues: Potassium-transporting ATPase KdpC subunit (193 aa).

Residues 10-30 (AAIIIFSVLTGVIYPALVTVI) traverse the membrane as a helical segment.

Belongs to the KdpC family. In terms of assembly, the system is composed of three essential subunits: KdpA, KdpB and KdpC.

The protein resides in the cell membrane. Its function is as follows. Part of the high-affinity ATP-driven potassium transport (or Kdp) system, which catalyzes the hydrolysis of ATP coupled with the electrogenic transport of potassium into the cytoplasm. This subunit acts as a catalytic chaperone that increases the ATP-binding affinity of the ATP-hydrolyzing subunit KdpB by the formation of a transient KdpB/KdpC/ATP ternary complex. In Herpetosiphon aurantiacus (strain ATCC 23779 / DSM 785 / 114-95), this protein is Potassium-transporting ATPase KdpC subunit.